The chain runs to 309 residues: Olfactory receptor 5B21 (309 aa).

Topologically, residues 1-26 (MENSTEVTEFILLGLTDDPNLQIPLL) are extracellular. The N-linked (GlcNAc...) asparagine glycan is linked to Asn3. The chain crosses the membrane as a helical span at residues 27-47 (LAFLFIYLITLLGNGGMMVII). Residues 48–55 (HSDSHLHT) are Cytoplasmic-facing. The helical transmembrane segment at 56–76 (PMYFFLSNLSLVDLGYSSAVA) threads the bilayer. The Extracellular segment spans residues 77–95 (PKTVAALRSGDKAISYDGC). Cys95 and Cys177 are disulfide-bonded. Residues 96-116 (AAQFFFFVGFATVECYLLASM) form a helical membrane-spanning segment. Residues 117–137 (AYDRHAAVCRPLHYTTTMTAG) lie on the Cytoplasmic side of the membrane. Residues 138 to 158 (VCALLATGSYVSGFLNASIHA) form a helical membrane-spanning segment. Residues 159–199 (AGTFRLSFCGSNEINHFFCDIPPLLALSCSDTRISKLVVFV) are Extracellular-facing. The chain crosses the membrane as a helical span at residues 200–220 (AGFNVFFTLLVILISYFFICI). The Cytoplasmic portion of the chain corresponds to 221–235 (TIQRMHSAEGQKKVF). A helical membrane pass occupies residues 236 to 256 (STCASHLTALSIFYGTIIFMY). Residues 257–270 (LQPNSSQSVDTDKI) are Extracellular-facing. N-linked (GlcNAc...) asparagine glycosylation is present at Asn260. A helical transmembrane segment spans residues 271-291 (ASVFYTVVIPMLNPLIYSLRN). Residues 292-309 (KEVKSALWKILNKLYPQY) lie on the Cytoplasmic side of the membrane.

Belongs to the G-protein coupled receptor 1 family.

It localises to the cell membrane. In terms of biological role, odorant receptor. The chain is Olfactory receptor 5B21 from Homo sapiens (Human).